The primary structure comprises 101 residues: Large ribosomal subunit protein uL24 (101 aa).

This sequence belongs to the universal ribosomal protein uL24 family. In terms of assembly, part of the 50S ribosomal subunit.

One of two assembly initiator proteins, it binds directly to the 5'-end of the 23S rRNA, where it nucleates assembly of the 50S subunit. In terms of biological role, one of the proteins that surrounds the polypeptide exit tunnel on the outside of the subunit. The protein is Large ribosomal subunit protein uL24 of Thermobifida fusca (strain YX).